The chain runs to 71 residues: Translation initiation factor IF-1 (71 aa).

Residues 1–71 enclose the S1-like domain; that stretch reads MSKDDLIQFT…LTKGRVIHRH (71 aa).

This sequence belongs to the IF-1 family. As to quaternary structure, component of the 30S ribosomal translation pre-initiation complex which assembles on the 30S ribosome in the order IF-2 and IF-3, IF-1 and N-formylmethionyl-tRNA(fMet); mRNA recruitment can occur at any time during PIC assembly.

The protein resides in the cytoplasm. Its function is as follows. One of the essential components for the initiation of protein synthesis. Stabilizes the binding of IF-2 and IF-3 on the 30S subunit to which N-formylmethionyl-tRNA(fMet) subsequently binds. Helps modulate mRNA selection, yielding the 30S pre-initiation complex (PIC). Upon addition of the 50S ribosomal subunit IF-1, IF-2 and IF-3 are released leaving the mature 70S translation initiation complex. The protein is Translation initiation factor IF-1 of Rickettsia conorii (strain ATCC VR-613 / Malish 7).